We begin with the raw amino-acid sequence, 293 residues long: 4-hydroxy-tetrahydrodipicolinate synthase (293 aa).

A pyruvate-binding site is contributed by Thr47. Catalysis depends on Tyr135, which acts as the Proton donor/acceptor. The Schiff-base intermediate with substrate role is filled by Lys163. Residue Val205 participates in pyruvate binding.

This sequence belongs to the DapA family. As to quaternary structure, homotetramer; dimer of dimers.

Its subcellular location is the cytoplasm. The catalysed reaction is L-aspartate 4-semialdehyde + pyruvate = (2S,4S)-4-hydroxy-2,3,4,5-tetrahydrodipicolinate + H2O + H(+). It participates in amino-acid biosynthesis; L-lysine biosynthesis via DAP pathway; (S)-tetrahydrodipicolinate from L-aspartate: step 3/4. In terms of biological role, catalyzes the condensation of (S)-aspartate-beta-semialdehyde [(S)-ASA] and pyruvate to 4-hydroxy-tetrahydrodipicolinate (HTPA). In Leptothrix cholodnii (strain ATCC 51168 / LMG 8142 / SP-6) (Leptothrix discophora (strain SP-6)), this protein is 4-hydroxy-tetrahydrodipicolinate synthase.